The sequence spans 167 residues: Endoribonuclease YbeY (167 aa).

Zn(2+) is bound by residues His-131, His-135, and His-141.

The protein belongs to the endoribonuclease YbeY family. The cofactor is Zn(2+).

It is found in the cytoplasm. Single strand-specific metallo-endoribonuclease involved in late-stage 70S ribosome quality control and in maturation of the 3' terminus of the 16S rRNA. The sequence is that of Endoribonuclease YbeY from Rickettsia prowazekii (strain Madrid E).